Reading from the N-terminus, the 425-residue chain is Type II secretion system protein L (425 aa).

Residues 1–273 (MKIAGKWKRK…DKAWQNTLLP (273 aa)) lie on the Cytoplasmic side of the membrane. A helical transmembrane segment spans residues 274–290 (WRGVGIAFACYLLLVVA). Residues 291 to 425 (DAGWAHYQLY…EGRLTLRSQQ (135 aa)) are Periplasmic-facing.

This sequence belongs to the GSP L family. Type II secretion system is composed of four main components: the outer membrane complex, the inner membrane complex, the cytoplasmic secretion ATPase and the periplasm-spanning pseudopilus. Forms homodimers. Interacts with OutM/GspM. Interacts with OutE/GspE and OutF/GspF.

Its subcellular location is the cell inner membrane. In terms of biological role, inner membrane component of the type II secretion system required for the energy-dependent secretion of extracellular factors such as proteases and toxins from the periplasm. Plays a role in the complex assembly and recruits OutM resulting in a stable complex in the inner membrane. Provides thus a link between the energy-providing OutE protein in the cytoplasm and the rest of the T2SS machinery. The chain is Type II secretion system protein L (outL) from Pectobacterium carotovorum subsp. carotovorum (Erwinia carotovora subsp. carotovora).